We begin with the raw amino-acid sequence, 145 residues long: UPF0310 protein Mvan_0064 (145 aa).

This sequence belongs to the UPF0310 family.

The protein is UPF0310 protein Mvan_0064 of Mycolicibacterium vanbaalenii (strain DSM 7251 / JCM 13017 / BCRC 16820 / KCTC 9966 / NRRL B-24157 / PYR-1) (Mycobacterium vanbaalenii).